Reading from the N-terminus, the 208-residue chain is Ribosomal RNA large subunit methyltransferase E (208 aa).

Positions 63, 65, 83, 99, and 124 each coordinate S-adenosyl-L-methionine. Residue K164 is the Proton acceptor of the active site.

Belongs to the class I-like SAM-binding methyltransferase superfamily. RNA methyltransferase RlmE family.

The protein localises to the cytoplasm. The enzyme catalyses uridine(2552) in 23S rRNA + S-adenosyl-L-methionine = 2'-O-methyluridine(2552) in 23S rRNA + S-adenosyl-L-homocysteine + H(+). Its function is as follows. Specifically methylates the uridine in position 2552 of 23S rRNA at the 2'-O position of the ribose in the fully assembled 50S ribosomal subunit. The chain is Ribosomal RNA large subunit methyltransferase E from Salmonella agona (strain SL483).